Here is a 116-residue protein sequence, read N- to C-terminus: Large ribosomal subunit protein uL18 (116 aa).

The protein belongs to the universal ribosomal protein uL18 family. In terms of assembly, part of the 50S ribosomal subunit; part of the 5S rRNA/L5/L18/L25 subcomplex. Contacts the 5S and 23S rRNAs.

Functionally, this is one of the proteins that bind and probably mediate the attachment of the 5S RNA into the large ribosomal subunit, where it forms part of the central protuberance. This is Large ribosomal subunit protein uL18 from Chromohalobacter salexigens (strain ATCC BAA-138 / DSM 3043 / CIP 106854 / NCIMB 13768 / 1H11).